The sequence spans 915 residues: Nitrate reductase [NADH] (915 aa).

The tract at residues 1–102 (MAASVEPRQP…PRDEGTADAW (102 aa)) is disordered. Over residues 16–26 (APATAPTARAP) the composition is skewed to low complexity. The segment covering 57-71 (AEEEEDDDDEDDEGH) has biased composition (acidic residues). Basic and acidic residues predominate over residues 88 to 97 (PSTRDPRDEG). C189 contributes to the Mo-molybdopterin binding site. The Cytochrome b5 heme-binding domain maps to 538-613 (DKQFTMSEVR…LDTYRIGELI (76 aa)). Residues H573 and H596 each coordinate heme. Residues 654-767 (REKVPCRLVD…KGPLGHVEYT (114 aa)) enclose the FAD-binding FR-type domain. FAD-binding positions include 706–709 (RAYT), 723–727 (LVKVY), F728, F735, 740–742 (LMT), S791, and T794.

Belongs to the nitrate reductase family. As to quaternary structure, homodimer. It depends on FAD as a cofactor. Requires heme as cofactor. Mo-molybdopterin is required as a cofactor.

It carries out the reaction nitrite + NAD(+) + H2O = nitrate + NADH + H(+). In terms of biological role, nitrate reductase is a key enzyme involved in the first step of nitrate assimilation in plants, fungi and bacteria. This chain is Nitrate reductase [NADH], found in Hordeum vulgare (Barley).